A 26-amino-acid polypeptide reads, in one-letter code: Conotoxin reg6(gamma) (26 aa).

Residues 1-12 are compositionally biased toward acidic residues; that stretch reads RVLEPGXEDPDV. The interval 1–26 is disordered; the sequence is RVLEPGXEDPDVGEPAGEYEHHLLEX. 4-carboxyglutamate is present on glutamate 4. The residue at position 5 (proline 5) is a 4-hydroxyproline. Glutamate 8 carries the post-translational modification 4-carboxyglutamate. Position 10 is a 4-hydroxyproline (proline 10). 4-carboxyglutamate is present on glutamate 14. Proline 15 carries the 4-hydroxyproline modification. 4-carboxyglutamate is present on residues glutamate 18, glutamate 20, and glutamate 25.

As to expression, expressed by the venom duct.

It localises to the secreted. This chain is Conotoxin reg6(gamma), found in Conus regius (Crown cone).